Reading from the N-terminus, the 25-residue chain is Bombinin-like peptide 4 (25 aa).

F25 carries the phenylalanine amide modification.

It belongs to the bombinin family. In terms of tissue distribution, expressed by the skin glands.

The protein localises to the secreted. In terms of biological role, has antimicrobial activity, but no hemolytic activity. Preference on killing Gram-negative non-enteric bacteria. In Bombina orientalis (Oriental fire-bellied toad), this protein is Bombinin-like peptide 4.